The following is a 497-amino-acid chain: Acetyltransferase adrJ (497 aa).

Active-site proton acceptor residues include histidine 174 and aspartate 422. The tract at residues 430-451 is disordered; that stretch reads SSAQSSSQNTQKKGKPSYVNGV.

The protein belongs to the plant acyltransferase family. Monomer.

The protein operates within secondary metabolite biosynthesis; terpenoid biosynthesis. Its function is as follows. Acetyltransferase; part of the gene cluster that mediates the biosynthesis of andrastins, meroterpenoid compounds that exhibit inhibitory activity against ras farnesyltransferase, suggesting that they could be promising leads for antitumor agents. The first step of the pathway is the synthesis of 3,5-dimethylorsellinic acid (DMOA) by the polyketide synthase adrD via condensation of one acetyl-CoA starter unit with 3 malonyl-CoA units and 2 methylations. DMAO is then converted to farnesyl-DMAO by the prenyltransferase adrG. The methyltransferase adrK catalyzes the methylation of the carboxyl group of farnesyl-DMAO to farnesyl-DMAO methyl ester which is further converted to epoxyfarnesyl-DMAO methyl ester by the FAD-dependent monooxygenase adrH. The terpene cyclase adrI then catalyzes the carbon skeletal rearrangement to generate the andrastin E, the first compound in the pathway having the andrastin scaffold, with the tetracyclic ring system. The post-cyclization tailoring enzymes adrF, adrE, adrJ, and adrA, are involved in the conversion of andrastin E into andrastin A. The short chain dehydrogenase adrF is responsible for the oxidation of the C-3 a hydroxyl group of andrastin E to yield the corresponding ketone, andrastin D. The ketoreductase adrE stereoselectively reduces the carbonyl moiety to reverse the stereochemistry of the C-3 position to yield andrastin F. The acetyltransferase adrJ is the acetyltransferase that attaches the acetyl group to the C-3 hydroxyl group of andrastin F to yield andrastin C. Finally, the cytochrome P450 monooxygenase adrA catalyzes two sequential oxidation reactions of the C-23 methyl group, to generate the corresponding alcohol andrastin B, and aldehyde andrastin A. This Penicillium rubens (strain ATCC 28089 / DSM 1075 / NRRL 1951 / Wisconsin 54-1255) (Penicillium chrysogenum) protein is Acetyltransferase adrJ.